We begin with the raw amino-acid sequence, 184 residues long: Probable chorismate pyruvate-lyase 1 (184 aa).

Substrate contacts are provided by Arg70, Leu108, and Glu166.

This sequence belongs to the UbiC family.

The protein localises to the cytoplasm. It catalyses the reaction chorismate = 4-hydroxybenzoate + pyruvate. It participates in cofactor biosynthesis; ubiquinone biosynthesis. Removes the pyruvyl group from chorismate, with concomitant aromatization of the ring, to provide 4-hydroxybenzoate (4HB) for the ubiquinone pathway. This is Probable chorismate pyruvate-lyase 1 from Burkholderia pseudomallei (strain 1710b).